Here is a 160-residue protein sequence, read N- to C-terminus: Transcription antitermination protein NusB (160 aa).

Belongs to the NusB family.

Functionally, involved in transcription antitermination. Required for transcription of ribosomal RNA (rRNA) genes. Binds specifically to the boxA antiterminator sequence of the ribosomal RNA (rrn) operons. The chain is Transcription antitermination protein NusB from Gluconobacter oxydans (strain 621H) (Gluconobacter suboxydans).